Here is a 374-residue protein sequence, read N- to C-terminus: RNA polymerase sigma factor SigA (374 aa).

Positions 141–211 are sigma-70 factor domain-2; it reads LAEANLRLVV…TRAIADQART (71 aa). Positions 165–168 match the Interaction with polymerase core subunit RpoC motif; sequence DLIQ. Residues 220–296 form a sigma-70 factor domain-3 region; the sequence is ETINKLIRVQ…DQDATSPSDH (77 aa). Residues 309–362 form a sigma-70 factor domain-4 region; it reads VLDTLTDREENVLRLRFGLDDGRTRTLEEVGRVFGVTRERIRQIEAKALRKLRH. The segment at residues 335–354 is a DNA-binding region (H-T-H motif); that stretch reads LEEVGRVFGVTRERIRQIEA.

It belongs to the sigma-70 factor family. RpoD/SigA subfamily. In terms of assembly, interacts transiently with the RNA polymerase catalytic core.

It localises to the cytoplasm. Functionally, sigma factors are initiation factors that promote the attachment of RNA polymerase to specific initiation sites and are then released. This sigma factor is the primary sigma factor during exponential growth. The chain is RNA polymerase sigma factor SigA from Listeria innocua serovar 6a (strain ATCC BAA-680 / CLIP 11262).